We begin with the raw amino-acid sequence, 181 residues long: Squamosa promoter-binding-like protein 5 (181 aa).

Over residues 1-10 the composition is skewed to basic residues; it reads MEGQRTQRRG. The tract at residues 1–58 is disordered; the sequence is MEGQRTQRRGYLKDKATVSNLVEEEMENGMDGEEEDGGDEDKRKKVMERVRGPSTDRV. Acidic residues predominate over residues 22–39; sequence VEEEMENGMDGEEEDGGD. Residues 40–51 are compositionally biased toward basic and acidic residues; that stretch reads EDKRKKVMERVR. An SBP-type zinc finger spans residues 60–137; the sequence is SRLCQVDRCT…AGHNERRRKI (78 aa). The Zn(2+) site is built by Cys63, Cys68, Cys85, His88, Cys104, Cys107, His111, and Cys123. Positions 120–136 match the Bipartite nuclear localization signal motif; sequence KRSCRRRLAGHNERRRK. Residues 128-181 are disordered; the sequence is AGHNERRRKISGDSFGEGSGRRGFSGQLIQTQERNRVDRKLPMTNSSFKRPQIR. Over residues 170 to 181 the composition is skewed to polar residues; sequence MTNSSFKRPQIR.

It depends on Zn(2+) as a cofactor. As to expression, expressed in the inflorescence apical meristem and young flowers.

It is found in the nucleus. It localises to the cytoplasm. Functionally, trans-acting factor that binds specifically to the consensus nucleotide sequence 5'-TNCGTACAA-3' of AP1 promoter. Promotes both vegetative phase change and flowering. This chain is Squamosa promoter-binding-like protein 5 (SPL5), found in Arabidopsis thaliana (Mouse-ear cress).